The primary structure comprises 450 residues: Phosphoglucosamine mutase (450 aa).

The active-site Phosphoserine intermediate is the serine 101. Serine 101, aspartate 241, aspartate 243, and aspartate 245 together coordinate Mg(2+). Position 101 is a phosphoserine (serine 101).

This sequence belongs to the phosphohexose mutase family. The cofactor is Mg(2+). Post-translationally, activated by phosphorylation.

The catalysed reaction is alpha-D-glucosamine 1-phosphate = D-glucosamine 6-phosphate. Catalyzes the conversion of glucosamine-6-phosphate to glucosamine-1-phosphate. The sequence is that of Phosphoglucosamine mutase from Listeria innocua serovar 6a (strain ATCC BAA-680 / CLIP 11262).